The following is a 323-amino-acid chain: Fructose-1,6-bisphosphatase class 1 (323 aa).

Mg(2+) is bound by residues E90, D111, L113, and D114. Substrate-binding positions include 114-117 (DGSS), Y222, and K253. E259 contacts Mg(2+).

This sequence belongs to the FBPase class 1 family. As to quaternary structure, homotetramer. The cofactor is Mg(2+).

It localises to the cytoplasm. It catalyses the reaction beta-D-fructose 1,6-bisphosphate + H2O = beta-D-fructose 6-phosphate + phosphate. Its pathway is carbohydrate biosynthesis; gluconeogenesis. In Pelobacter propionicus (strain DSM 2379 / NBRC 103807 / OttBd1), this protein is Fructose-1,6-bisphosphatase class 1.